The sequence spans 398 residues: 1-deoxy-D-xylulose 5-phosphate reductoisomerase (398 aa).

T10, G11, S12, I13, G36, R37, N38, and N124 together coordinate NADPH. A 1-deoxy-D-xylulose 5-phosphate-binding site is contributed by K125. E126 is an NADPH binding site. D150 contributes to the Mn(2+) binding site. 4 residues coordinate 1-deoxy-D-xylulose 5-phosphate: S151, E152, S186, and H209. A Mn(2+)-binding site is contributed by E152. NADPH is bound at residue G215. S222, N227, K228, and E231 together coordinate 1-deoxy-D-xylulose 5-phosphate. Residue E231 coordinates Mn(2+).

Belongs to the DXR family. Homodimer. The cofactor is Mg(2+). Mn(2+) is required as a cofactor.

The catalysed reaction is 2-C-methyl-D-erythritol 4-phosphate + NADP(+) = 1-deoxy-D-xylulose 5-phosphate + NADPH + H(+). It functions in the pathway isoprenoid biosynthesis; isopentenyl diphosphate biosynthesis via DXP pathway; isopentenyl diphosphate from 1-deoxy-D-xylulose 5-phosphate: step 1/6. Its function is as follows. Catalyzes the NADPH-dependent rearrangement and reduction of 1-deoxy-D-xylulose-5-phosphate (DXP) to 2-C-methyl-D-erythritol 4-phosphate (MEP). This is 1-deoxy-D-xylulose 5-phosphate reductoisomerase from Yersinia pseudotuberculosis serotype O:1b (strain IP 31758).